Reading from the N-terminus, the 334-residue chain is Nucleoid-associated protein SG1574 (334 aa).

This sequence belongs to the YejK family.

The protein localises to the cytoplasm. The protein resides in the nucleoid. This chain is Nucleoid-associated protein SG1574, found in Sodalis glossinidius (strain morsitans).